Reading from the N-terminus, the 464-residue chain is MEKKESLDSSLKEIVSVCKRRGFVYPGSEIYGGLSNTFDYGPYGVELLQNLKQLWWKYFVHLREDIVGLDSSILLNPKVWEASGHVSNFNDPLIDCKNCKTRIRADKFLEDQKGEGFATGLTLEKMNQVIKESNFACPNCGQRGTFTEARDFNLMFKTSHGASAEDSLDIYLRPETAQGIFLNFKNVVSTTRRKIPFGIAQIGKSFRNEIMARQFVFRTREFEQMEMEFFCEPGTQKEWFSHWVNYCMNWLTEQVGIKKENLRVREHEKEELSFYSEGTSDIEFKYNFGWGELWGIASRTDYDLNQHQKFSGEDLKYQDQVQNKKYVPFVVEPALGVNRLFLAVVTDAYEEEKLPDGETRTVLRFSPKIAPVKAAVFPLMKKDGLPEKSREIFADLSKLGNIEYDDGGAIGKRYRRQDEIGTPFCITVDYDTLKDNTVTVRERDSMSQERIAVNQLKNWLFERL.

2 residues coordinate substrate: Arg104 and Glu175. ATP is bound by residues Arg207–Glu209, Phe217–Phe222, Glu292–Leu293, and Gly336–Arg339. Phe222–Glu226 provides a ligand contact to substrate. A substrate-binding site is contributed by Glu332–Gly336.

It belongs to the class-II aminoacyl-tRNA synthetase family. Homodimer.

The protein resides in the cytoplasm. It carries out the reaction tRNA(Gly) + glycine + ATP = glycyl-tRNA(Gly) + AMP + diphosphate. Functionally, catalyzes the attachment of glycine to tRNA(Gly). This chain is Glycine--tRNA ligase, found in Leptospira interrogans serogroup Icterohaemorrhagiae serovar copenhageni (strain Fiocruz L1-130).